The primary structure comprises 299 residues: MDPEGLQFLLPPASLAALANSWLQEDCPGLNFASLVTGSAPAQAVLWAKSPGVLAGRPFFDAIFTQLNCQVSWLLPEGSKLVPVVKVAEVRGPAHHLLLGERVALNTLARCSGIASAAATAVEVATSTGWAGHVAGTRKTTPGFRLVEKYGLLVGGAECHRYDLGGLVMVKDNHVVAAGSMEKAVLKARQAAGFPLKVEVECSSLKEALQAAEAGADLVMLDNFKPEELHPTAATLKAKFPNVSVEASGGVTLDNLPQFCGTNIDVISLGMLTQAAPALDFSLKLYAEGDIPVPHARRS.

Residues 8-12 (FLLPP) are important for hexamer formation. Residues arginine 102, 138-139 (RK), 160-161 (HR), lysine 171, glutamate 201, aspartate 222, 248-250 (SGG), and glycine 270 each bind quinolinate.

This sequence belongs to the NadC/ModD family. Hexamer formed by 3 homodimers.

It catalyses the reaction nicotinate beta-D-ribonucleotide + CO2 + diphosphate = quinolinate + 5-phospho-alpha-D-ribose 1-diphosphate + 2 H(+). It participates in cofactor biosynthesis; NAD(+) biosynthesis; nicotinate D-ribonucleotide from quinolinate: step 1/1. Functionally, involved in the catabolism of quinolinic acid (QA). This Rattus norvegicus (Rat) protein is Nicotinate-nucleotide pyrophosphorylase [carboxylating] (Qprt).